A 227-amino-acid polypeptide reads, in one-letter code: Protein CAP22 (227 aa).

N-linked (GlcNAc...) asparagine glycans are attached at residues N55 and N72. The segment at 143–162 is disordered; sequence TTIGGGATPAPTSERSRTSD.

The protein resides in the secreted. It localises to the cell wall. The sequence is that of Protein CAP22 (CAP22) from Colletotrichum gloeosporioides (Anthracnose fungus).